A 207-amino-acid chain; its full sequence is Large ribosomal subunit protein uL4 (207 aa).

Positions 50–75 (KTKTVSEVSGTTKKPFKQKGTGNARQ) are disordered.

This sequence belongs to the universal ribosomal protein uL4 family. As to quaternary structure, part of the 50S ribosomal subunit.

One of the primary rRNA binding proteins, this protein initially binds near the 5'-end of the 23S rRNA. It is important during the early stages of 50S assembly. It makes multiple contacts with different domains of the 23S rRNA in the assembled 50S subunit and ribosome. Its function is as follows. Forms part of the polypeptide exit tunnel. This Rickettsia akari (strain Hartford) protein is Large ribosomal subunit protein uL4.